Here is a 409-residue protein sequence, read N- to C-terminus: tRNA(Met) cytidine acetate ligase (409 aa).

ATP-binding positions include V7–H20, G102, N169, and R194.

It belongs to the TmcAL family.

The protein localises to the cytoplasm. The enzyme catalyses cytidine(34) in elongator tRNA(Met) + acetate + ATP = N(4)-acetylcytidine(34) in elongator tRNA(Met) + AMP + diphosphate. In terms of biological role, catalyzes the formation of N(4)-acetylcytidine (ac(4)C) at the wobble position of elongator tRNA(Met), using acetate and ATP as substrates. First activates an acetate ion to form acetyladenylate (Ac-AMP) and then transfers the acetyl group to tRNA to form ac(4)C34. This Clostridium botulinum (strain Kyoto / Type A2) protein is tRNA(Met) cytidine acetate ligase.